A 576-amino-acid polypeptide reads, in one-letter code: Proline--tRNA ligase (576 aa).

This sequence belongs to the class-II aminoacyl-tRNA synthetase family. ProS type 1 subfamily. Homodimer.

The protein localises to the cytoplasm. The catalysed reaction is tRNA(Pro) + L-proline + ATP = L-prolyl-tRNA(Pro) + AMP + diphosphate. Catalyzes the attachment of proline to tRNA(Pro) in a two-step reaction: proline is first activated by ATP to form Pro-AMP and then transferred to the acceptor end of tRNA(Pro). As ProRS can inadvertently accommodate and process non-cognate amino acids such as alanine and cysteine, to avoid such errors it has two additional distinct editing activities against alanine. One activity is designated as 'pretransfer' editing and involves the tRNA(Pro)-independent hydrolysis of activated Ala-AMP. The other activity is designated 'posttransfer' editing and involves deacylation of mischarged Ala-tRNA(Pro). The misacylated Cys-tRNA(Pro) is not edited by ProRS. The sequence is that of Proline--tRNA ligase from Leptospira interrogans serogroup Icterohaemorrhagiae serovar copenhageni (strain Fiocruz L1-130).